The chain runs to 499 residues: MPNIEADRVTSIPENNDRKPKSQPLRNNLHDTVKSYSIRDAATANIGPPAERHYPWGCPVTHTKEKFYTICADYAFLNQATSLCKSSSSVCSSSSEDKSALSNTINYIDLQTSESDSACNEDASLDSLSGSLGTRPLAWEIDTSDFSTMTTRLKSRSGVNKQTPKKKTERKAKPLRDCPQHLILDDVKQRKVLDLRRWYCISRPQYKTSCGISSLVSCWNFLYSTLGAGSLPPITQEEALHILGFQPPFEEIRFGPFTGNTTLMRWFRQINDHYHVKGCSYVLYKPHGKNKTAGETAVGALSKLTQGLKEDSTAYIYHCQNHYFCPIGFEATPAKASKAYRGQLFPHEVEYWILIGEPSRKHPTIHCKKWTDIVTDLNTQNPEYFDIRHPERGLQYRKTKKVGGNLHCLLAFQRLSWQRFGPWPLQLGNLRPEPQPPIQGRRIPKSESEDNVSKKQHGRLGRSFSAGFQQELAWKRMCNIRERRGSGSPESDTDCEGND.

3 disordered regions span residues 1–29 (MPNIEADRVTSIPENNDRKPKSQPLRNNL), 153–172 (LKSRSGVNKQTPKKKTERKA), and 428–465 (GNLRPEPQPPIQGRRIPKSESEDNVSKKQHGRLGRSFS). A compositionally biased stretch (polar residues) spans 153 to 162 (LKSRSGVNKQ). Positions 444-453 (PKSESEDNVS) are enriched in basic and acidic residues.

It belongs to the BIVM family.

The protein resides in the cytoplasm. It localises to the nucleus. This chain is Basic immunoglobulin-like variable motif-containing protein (bivm), found in Xenopus tropicalis (Western clawed frog).